A 114-amino-acid chain; its full sequence is uncharacterized protein (114 aa).

This is an uncharacterized protein from Acanthamoeba polyphaga (Amoeba).